Reading from the N-terminus, the 103-residue chain is Carboxysome shell protein CcmK3 (103 aa).

The region spanning 4–91 (AVGVIQTLGF…PPENVLAVLP (88 aa)) is the BMC domain.

This sequence belongs to the bacterial microcompartments protein family. CcmK subfamily. As to quaternary structure, forms mixed heterohexamers with CcmK4, probably with 1:5 CcmK3:CcmK4 stoichiometry. Only very weak interactions with CcmK1 and CcmK2 were seen. Bulky residues in the pore region probably preclude the formation of homohexamers by this subunit.

The protein localises to the carboxysome. In terms of biological role, a probably minor shell protein component of the carboxysome, a polyhedral inclusion where RuBisCO (ribulose bisphosphate carboxylase, rbcL-rbcS) is sequestered. This subunit probably does not form homohexamers. This is Carboxysome shell protein CcmK3 from Synechocystis sp. (strain ATCC 27184 / PCC 6803 / Kazusa).